We begin with the raw amino-acid sequence, 190 residues long: Putative manganese efflux pump MntP (190 aa).

The next 6 helical transmembrane spans lie at 3 to 23, 37 to 57, 72 to 88, 111 to 131, 138 to 158, and 164 to 184; these read FLQI…CSVV, LVLA…GWFI, HWIA…KMIW, IILG…LAFV, VALS…WIGH, and FGKW…ANIV.

Belongs to the MntP (TC 9.B.29) family.

The protein localises to the cell membrane. Probably functions as a manganese efflux pump. In Corynebacterium glutamicum (strain ATCC 13032 / DSM 20300 / JCM 1318 / BCRC 11384 / CCUG 27702 / LMG 3730 / NBRC 12168 / NCIMB 10025 / NRRL B-2784 / 534), this protein is Putative manganese efflux pump MntP.